Consider the following 147-residue polypeptide: Low molecular weight protein-tyrosine-phosphatase Wzb (147 aa).

Cys-9 serves as the catalytic Nucleophile. Arg-15 is a catalytic residue. Asp-115 acts as the Proton donor in catalysis.

Belongs to the low molecular weight phosphotyrosine protein phosphatase family.

The enzyme catalyses O-phospho-L-tyrosyl-[protein] + H2O = L-tyrosyl-[protein] + phosphate. The protein operates within glycan metabolism; exopolysaccharide biosynthesis. Its function is as follows. Dephosphorylates Wzc. Required for the extracellular polysaccharide colanic acid synthesis. Probably involved in the export of colanic acid from the cell to medium. Involved in protection of cells against contact-dependent growth inhibition (CDI). The sequence is that of Low molecular weight protein-tyrosine-phosphatase Wzb (wzb) from Escherichia coli O157:H7.